We begin with the raw amino-acid sequence, 253 residues long: Large ribosomal subunit protein bL28m (253 aa).

The N-terminal 55 residues, Met-1–Lys-55, are a transit peptide targeting the mitochondrion.

It belongs to the bacterial ribosomal protein bL28 family. Component of the mitochondrial ribosome large subunit (39S) which comprises a 16S rRNA and about 50 distinct proteins.

It localises to the mitochondrion. The polypeptide is Large ribosomal subunit protein bL28m (mrpl28) (Xenopus laevis (African clawed frog)).